The primary structure comprises 462 residues: ATP synthase subunit beta (462 aa).

149-156 contributes to the ATP binding site; it reads GGAGVGKT.

Belongs to the ATPase alpha/beta chains family. In terms of assembly, F-type ATPases have 2 components, CF(1) - the catalytic core - and CF(0) - the membrane proton channel. CF(1) has five subunits: alpha(3), beta(3), gamma(1), delta(1), epsilon(1). CF(0) has three main subunits: a(1), b(2) and c(9-12). The alpha and beta chains form an alternating ring which encloses part of the gamma chain. CF(1) is attached to CF(0) by a central stalk formed by the gamma and epsilon chains, while a peripheral stalk is formed by the delta and b chains.

The protein localises to the cell inner membrane. It carries out the reaction ATP + H2O + 4 H(+)(in) = ADP + phosphate + 5 H(+)(out). In terms of biological role, produces ATP from ADP in the presence of a proton gradient across the membrane. The catalytic sites are hosted primarily by the beta subunits. The sequence is that of ATP synthase subunit beta from Fusobacterium nucleatum subsp. nucleatum (strain ATCC 25586 / DSM 15643 / BCRC 10681 / CIP 101130 / JCM 8532 / KCTC 2640 / LMG 13131 / VPI 4355).